A 444-amino-acid chain; its full sequence is Nuclear envelope integral membrane protein 1 (444 aa).

The signal sequence occupies residues 1-43 (MAGGMKVAVSPAVGPGPWGSGVGGGGTVRLLLILSGCLVYGTA). An N-linked (GlcNAc...) asparagine glycan is attached at asparagine 125. 5 helical membrane passes run 161–181 (PKLF…DLLS), 186–206 (FYYS…IIFI), 216–236 (PIYV…QLVF), 245–265 (CYWQ…FAVC), and 289–309 (LCFM…IIIA). Residues 186–297 (FYYSTGMTVG…GLCFMYSGIQ (112 aa)) form an a; required for its colocalization with lamins at the nuclear envelope region. A b; required for interaction with RAN-GTP region spans residues 336–405 (PVPPRLLTEE…LTPNEVSVHE (70 aa)). The tract at residues 336–444 (PVPPRLLTEE…PAITQNNFLT (109 aa)) is required for nuclear localization. Serine 368, serine 424, and serine 425 each carry phosphoserine.

This sequence belongs to the NEMP family. In terms of assembly, homooligomer. Interacts with RAN-GTP. Interacts with EMD. Post-translationally, phosphorylation may regulate its interaction with RAN-GTP.

Its subcellular location is the nucleus inner membrane. It is found in the nucleus envelope. In terms of biological role, together with EMD, contributes to nuclear envelope stiffness in germ cells. Required for female fertility. Essential for normal erythropoiesis. Required for efficient nuclear envelope opening and enucleation during the late stages of erythroblast maturation. The protein is Nuclear envelope integral membrane protein 1 (NEMP1) of Homo sapiens (Human).